Here is a 162-residue protein sequence, read N- to C-terminus: Interleukin-2 (162 aa).

A signal peptide spans 1-20 (MYKIQLLSCIALTLALVANG). Threonine 23 carries O-linked (GalNAc...) threonine glycosylation. An N-linked (GlcNAc...) asparagine glycan is attached at asparagine 70. Cysteines 79 and 134 form a disulfide.

The protein belongs to the IL-2 family.

It localises to the secreted. Cytokine produced by activated CD4-positive helper T-cells and to a lesser extend activated CD8-positive T-cells and natural killer (NK) cells that plays pivotal roles in the immune response and tolerance. Binds to a receptor complex composed of either the high-affinity trimeric IL-2R (IL2RA/CD25, IL2RB/CD122 and IL2RG/CD132) or the low-affinity dimeric IL-2R (IL2RB and IL2RG). Interaction with the receptor leads to oligomerization and conformation changes in the IL-2R subunits resulting in downstream signaling starting with phosphorylation of JAK1 and JAK3. In turn, JAK1 and JAK3 phosphorylate the receptor to form a docking site leading to the phosphorylation of several substrates including STAT5. This process leads to activation of several pathways including STAT, phosphoinositide-3-kinase/PI3K and mitogen-activated protein kinase/MAPK pathways. Functions as a T-cell growth factor and can increase NK-cell cytolytic activity as well. Promotes strong proliferation of activated B-cells and subsequently immunoglobulin production. Plays a pivotal role in regulating the adaptive immune system by controlling the survival and proliferation of regulatory T-cells, which are required for the maintenance of immune tolerance. Moreover, participates in the differentiation and homeostasis of effector T-cell subsets, including Th1, Th2, Th17 as well as memory CD8-positive T-cells. In Cervus elaphus (Red deer), this protein is Interleukin-2 (IL2).